A 307-amino-acid polypeptide reads, in one-letter code: Adenosylcobinamide-GDP ribazoletransferase (307 aa).

Helical transmembrane passes span Pro-22–Ala-42, Pro-58–Ile-78, Gly-80–Leu-100, Phe-137–Val-157, Val-161–Leu-181, Thr-212–Val-232, Ala-248–Phe-268, and Cys-283–Ala-303.

This sequence belongs to the CobS family. Mg(2+) serves as cofactor.

The protein localises to the cell membrane. It catalyses the reaction alpha-ribazole + adenosylcob(III)inamide-GDP = adenosylcob(III)alamin + GMP + H(+). The catalysed reaction is alpha-ribazole 5'-phosphate + adenosylcob(III)inamide-GDP = adenosylcob(III)alamin 5'-phosphate + GMP + H(+). Its pathway is cofactor biosynthesis; adenosylcobalamin biosynthesis; adenosylcobalamin from cob(II)yrinate a,c-diamide: step 7/7. Its function is as follows. Joins adenosylcobinamide-GDP and alpha-ribazole to generate adenosylcobalamin (Ado-cobalamin). Also synthesizes adenosylcobalamin 5'-phosphate from adenosylcobinamide-GDP and alpha-ribazole 5'-phosphate. In Corynebacterium glutamicum (strain ATCC 13032 / DSM 20300 / JCM 1318 / BCRC 11384 / CCUG 27702 / LMG 3730 / NBRC 12168 / NCIMB 10025 / NRRL B-2784 / 534), this protein is Adenosylcobinamide-GDP ribazoletransferase.